The chain runs to 156 residues: Small ribosomal subunit protein uS7 (156 aa).

Belongs to the universal ribosomal protein uS7 family. As to quaternary structure, part of the 30S ribosomal subunit. Contacts proteins S9 and S11.

One of the primary rRNA binding proteins, it binds directly to 16S rRNA where it nucleates assembly of the head domain of the 30S subunit. Is located at the subunit interface close to the decoding center, probably blocks exit of the E-site tRNA. This chain is Small ribosomal subunit protein uS7, found in Aeromonas hydrophila subsp. hydrophila (strain ATCC 7966 / DSM 30187 / BCRC 13018 / CCUG 14551 / JCM 1027 / KCTC 2358 / NCIMB 9240 / NCTC 8049).